The sequence spans 340 residues: Nucleoid-associated protein PSPA7_4451 (340 aa).

It belongs to the YejK family.

The protein resides in the cytoplasm. Its subcellular location is the nucleoid. This chain is Nucleoid-associated protein PSPA7_4451, found in Pseudomonas paraeruginosa (strain DSM 24068 / PA7) (Pseudomonas aeruginosa (strain PA7)).